We begin with the raw amino-acid sequence, 133 residues long: ATP synthase epsilon chain, sodium ion specific (133 aa).

The protein belongs to the ATPase epsilon chain family. In terms of assembly, F-type ATPases have 2 components, CF(1) - the catalytic core - and CF(0) - the membrane proton channel. CF(1) has five subunits: alpha(3), beta(3), gamma(1), delta(1), epsilon(1). CF(0) has three main subunits: a, b and c.

It localises to the cell membrane. Its activity is regulated as follows. Inhibited by nitrate. Produces ATP from ADP in the presence of a sodium gradient across the membrane. This Acetobacterium woodii (strain ATCC 29683 / DSM 1030 / JCM 2381 / KCTC 1655 / WB1) protein is ATP synthase epsilon chain, sodium ion specific (atpC).